The sequence spans 338 residues: MSTTASTPSSLRHLISIKDLSDEEFRILVQRAQHFKNVFKANKTNDFQSNHLKLLGRTIALIFTKRSTRTRISTEGAATFFGAQPMFLGKEDIQLGVNESFYDTTKVVSSMVSCIFARVNKHEDILAFCKDSSVPIINSLCDKFHPLQAICDLLTIIENFNISLDEVNKGINSKLKMAWIGDANNVINDMCIACLKFGISVSISTPPGIEMDSDIVDEAKKVAERNGATFELTHDSLKASTNANILVTDTFVSMGEEFAKQAKLKQFKGFQINQELVSVADPNYKFMHCLPRHQEEVSDDVFYGEHSIVFEEAENRLYAAMSAIDIFVNNKGNFKDLK.

An N-acetylserine modification is found at Ser2. Carbamoyl phosphate-binding positions include 67 to 70 (STRT), Arg118, His145, and Gln148. 4 residues coordinate L-ornithine: Asn185, Asp249, Ser253, and Met254. Residue Cys289 is the Proton acceptor of the active site. Carbamoyl phosphate contacts are provided by residues 289-290 (CL) and Arg316.

This sequence belongs to the aspartate/ornithine carbamoyltransferase superfamily. OTCase family. Interacts with CAR1.

It is found in the cytoplasm. The catalysed reaction is carbamoyl phosphate + L-ornithine = L-citrulline + phosphate + H(+). It functions in the pathway amino-acid biosynthesis; L-arginine biosynthesis; L-arginine from L-ornithine and carbamoyl phosphate: step 1/3. With respect to regulation, forms a stable complex with CAR1 in the presence of ornithine and arginine. In this complex CAR1 retains activity, but ARG3 activity is inhibited. In Saccharomyces cerevisiae (strain ATCC 204508 / S288c) (Baker's yeast), this protein is Ornithine carbamoyltransferase (ARG3).